The primary structure comprises 482 residues: UDP-N-acetylmuramate--L-alanine ligase (482 aa).

123 to 129 is a binding site for ATP; that stretch reads GTHGKTT.

Belongs to the MurCDEF family.

The protein localises to the cytoplasm. The catalysed reaction is UDP-N-acetyl-alpha-D-muramate + L-alanine + ATP = UDP-N-acetyl-alpha-D-muramoyl-L-alanine + ADP + phosphate + H(+). It functions in the pathway cell wall biogenesis; peptidoglycan biosynthesis. Cell wall formation. The protein is UDP-N-acetylmuramate--L-alanine ligase of Pseudomonas putida (strain ATCC 47054 / DSM 6125 / CFBP 8728 / NCIMB 11950 / KT2440).